We begin with the raw amino-acid sequence, 692 residues long: Elongation factor G (692 aa).

One can recognise a tr-type G domain in the interval 8–283; the sequence is EDYRNFGIMA…AVVDYLPSPV (276 aa). GTP contacts are provided by residues 17–24, 81–85, and 135–138; these read AHIDAGKT, DTPGH, and NKMD.

It belongs to the TRAFAC class translation factor GTPase superfamily. Classic translation factor GTPase family. EF-G/EF-2 subfamily.

Its subcellular location is the cytoplasm. Its function is as follows. Catalyzes the GTP-dependent ribosomal translocation step during translation elongation. During this step, the ribosome changes from the pre-translocational (PRE) to the post-translocational (POST) state as the newly formed A-site-bound peptidyl-tRNA and P-site-bound deacylated tRNA move to the P and E sites, respectively. Catalyzes the coordinated movement of the two tRNA molecules, the mRNA and conformational changes in the ribosome. This chain is Elongation factor G, found in Caulobacter vibrioides (strain ATCC 19089 / CIP 103742 / CB 15) (Caulobacter crescentus).